Reading from the N-terminus, the 320-residue chain is GTP 3',8-cyclase (320 aa).

In terms of domain architecture, Radical SAM core spans 5 to 225 (QFDRKINYLR…IQLIKKDEKA (221 aa)). Arginine 14 provides a ligand contact to GTP. Cysteine 21 and cysteine 25 together coordinate [4Fe-4S] cluster. Position 27 (tyrosine 27) interacts with S-adenosyl-L-methionine. Cysteine 28 contributes to the [4Fe-4S] cluster binding site. A GTP-binding site is contributed by arginine 64. Glycine 68 contributes to the S-adenosyl-L-methionine binding site. Threonine 95 serves as a coordination point for GTP. Serine 119 contributes to the S-adenosyl-L-methionine binding site. Residue lysine 155 participates in GTP binding. Methionine 189 is an S-adenosyl-L-methionine binding site. [4Fe-4S] cluster is bound by residues cysteine 248 and cysteine 251. 253 to 255 (RIR) serves as a coordination point for GTP. Residue cysteine 265 coordinates [4Fe-4S] cluster.

Belongs to the radical SAM superfamily. MoaA family. In terms of assembly, monomer and homodimer. It depends on [4Fe-4S] cluster as a cofactor.

It catalyses the reaction GTP + AH2 + S-adenosyl-L-methionine = (8S)-3',8-cyclo-7,8-dihydroguanosine 5'-triphosphate + 5'-deoxyadenosine + L-methionine + A + H(+). It participates in cofactor biosynthesis; molybdopterin biosynthesis. Its function is as follows. Catalyzes the cyclization of GTP to (8S)-3',8-cyclo-7,8-dihydroguanosine 5'-triphosphate. This Campylobacter jejuni subsp. doylei (strain ATCC BAA-1458 / RM4099 / 269.97) protein is GTP 3',8-cyclase.